Consider the following 250-residue polypeptide: MARYDRAITVFSPDGHLFQVEYALEAVRKGNAAVGVRGTDTVVLAVEKKSTPKLQDSRSARKIVSLDNHIALACAGLKADARVLINKARIECQSHRLTLEDPVTVEYITRYIAGLQQKYTQSGGVRPFGLSTLIVGFDPYTRIPALYQTDPSGTFSAWKANATGRNSNSIREFLEKNYKESAGQETVKLAIRALLEVVESGGKNIEVAVMTREEGVLKQLEEEEIDIIVAEIEAEKAAAEAAKKGPAKET.

Lysine 62 participates in a covalent cross-link: Glycyl lysine isopeptide (Lys-Gly) (interchain with G-Cter in ubiquitin).

This sequence belongs to the peptidase T1A family. As to quaternary structure, component of the 20S core complex of the 26S proteasome. The 26S proteasome is composed of a core protease (CP), known as the 20S proteasome, capped at one or both ends by the 19S regulatory particle (RP/PA700). The 20S proteasome core is composed of 28 subunits that are arranged in four stacked rings, resulting in a barrel-shaped structure. The two end rings are each formed by seven alpha subunits, and the two central rings are each formed by seven beta subunits. The catalytic chamber with the active sites is on the inside of the barrel. Interacts with KIN10 and KIN11 SnRK subunits, and with the SKP1A/ASK1 subunit of the SCF E3 ubiquitin ligase complex. In terms of tissue distribution, expressed in roots, leaves and flowers.

The protein localises to the cytoplasm. Its subcellular location is the nucleus. In terms of biological role, the proteasome is a multicatalytic proteinase complex which is characterized by its ability to cleave peptides with Arg, Phe, Tyr, Leu, and Glu adjacent to the leaving group at neutral or slightly basic pH. The proteasome has an ATP-dependent proteolytic activity. Mediates the association of the SCF(TIR1) E3 ubiquitin ligase complex with the proteasome. The polypeptide is Proteasome subunit alpha type-7-A (PAD1) (Arabidopsis thaliana (Mouse-ear cress)).